We begin with the raw amino-acid sequence, 690 residues long: UvrABC system protein C (690 aa).

Residues 1–60 (MTTDSSDPAKPAGPGQPPGSGADTRPGGLATGQDVDPATIETDEDDEARLPDVPDEPTDA) form a disordered region. Over residues 41-58 (ETDEDDEARLPDVPDEPT) the composition is skewed to acidic residues. The region spanning 82–160 (TSPGVYRMMN…IKQLRPRFNV (79 aa)) is the GIY-YIG domain. Positions 270 to 305 (RAVKEELAREMEKASGDLAFERAALYRDRLAALSAI) constitute a UVR domain.

This sequence belongs to the UvrC family. Interacts with UvrB in an incision complex.

It is found in the cytoplasm. Functionally, the UvrABC repair system catalyzes the recognition and processing of DNA lesions. UvrC both incises the 5' and 3' sides of the lesion. The N-terminal half is responsible for the 3' incision and the C-terminal half is responsible for the 5' incision. The chain is UvrABC system protein C from Nitrobacter hamburgensis (strain DSM 10229 / NCIMB 13809 / X14).